The sequence spans 158 residues: NAD(P)H-quinone oxidoreductase subunit J, chloroplastic (158 aa).

This sequence belongs to the complex I 30 kDa subunit family. In terms of assembly, NDH is composed of at least 16 different subunits, 5 of which are encoded in the nucleus.

It is found in the plastid. It localises to the chloroplast thylakoid membrane. The enzyme catalyses a plastoquinone + NADH + (n+1) H(+)(in) = a plastoquinol + NAD(+) + n H(+)(out). The catalysed reaction is a plastoquinone + NADPH + (n+1) H(+)(in) = a plastoquinol + NADP(+) + n H(+)(out). Its function is as follows. NDH shuttles electrons from NAD(P)H:plastoquinone, via FMN and iron-sulfur (Fe-S) centers, to quinones in the photosynthetic chain and possibly in a chloroplast respiratory chain. The immediate electron acceptor for the enzyme in this species is believed to be plastoquinone. Couples the redox reaction to proton translocation, and thus conserves the redox energy in a proton gradient. The sequence is that of NAD(P)H-quinone oxidoreductase subunit J, chloroplastic from Nasturtium officinale (Watercress).